Reading from the N-terminus, the 792-residue chain is E3 UFM1-protein ligase 1 (792 aa).

Ala-2 carries the post-translational modification N-acetylalanine. The tract at residues 2 to 200 (ADAWEEIRRL…RGLFSAITRP (199 aa)) is mediates interaction with DDRGK1. Residues 2–212 (ADAWEEIRRL…VNSLISRYGF (211 aa)) are required for E3 UFM1-protein ligase activity. Residues 121–250 (DRLAEEVNDK…KAVFIPDIYS (130 aa)) form an involved in CDK5RAP3-binding region. The segment at 200–400 (PTAVNSLISR…NPVHLITEED (201 aa)) is mediates interaction with TRIP4. Positions 412–471 (TSKKDKKDERRRKATEGSGSVRGGGGSNAREYKIKKTKKKGRKDDDSDDESSHTGKKKPE) are disordered. The residue at position 433 (Arg-433) is an Omega-N-methylarginine. Positions 453 to 471 (RKDDDSDDESSHTGKKKPE) are enriched in basic and acidic residues. Ser-458 is subject to Phosphoserine. The segment at 488 to 682 (LQDAPEEFIS…QLKVTEDPAL (195 aa)) is mediates interaction with CDK5RAP3. Thr-534 is modified (phosphothreonine). Residue Ser-752 is modified to Phosphoserine.

This sequence belongs to the UFL1 family. Catalytic component of the UFM1 ribosome E3 ligase (UREL) complex, composed of UFL1, DDRGK1 and CDK5RAP3. Interacts with E2-like enzyme UFC1. Interacts with RELA. Interacts with NBN; promoting recruitment to double-strand breaks following DNA damage. Interacts (when phosphorylated) with YWHAG/14-3-3-gamma; sequestering UFL1 and preventing its association with PDCD1/PD-1 substrate. Ubiquitinated, leading to its degradation by the proteasome. Interaction with CDK5RAP3 protects both proteins against ubiquitination and degradation via the proteasome. In terms of processing, phosphorylation at Thr-534 by AMPK promotes its interaction with YWHAG/14-3-3-gamma, thereby preventing UFL1 association with PDCD1/PD-1 substrate.

Its subcellular location is the endoplasmic reticulum membrane. It is found in the cytoplasm. It localises to the cytosol. The protein resides in the nucleus. The protein localises to the chromosome. Functionally, E3 protein ligase that mediates ufmylation, the covalent attachment of the ubiquitin-like modifier UFM1 to lysine residues on target proteins, and which plays a key role in various processes, such as ribosome recycling, response to DNA damage, interferon response or reticulophagy (also called ER-phagy). Catalyzes ufmylation of many protein, such as CD274/PD-L1, CDK5RAP3, CYB5R3, DDRGK1, EIF6, histone H4, MRE11, P4HB, PDCD1/PD-1, TRIP4, RPN1, RPS20/uS10, RPL10/uL16, RPL26/uL24, SYVN1/HRD1 and TP53/p53. As part of the UREL complex, plays a key role in ribosome recycling by catalyzing mono-ufmylation of RPL26/uL24 subunit of the 60S ribosome. Ufmylation of RPL26/uL24 occurs on free 60S ribosomes following ribosome dissociation: it weakens the junction between post-termination 60S subunits and SEC61 translocons, promoting release and recycling of the large ribosomal subunit from the endoplasmic reticulum membrane. Ufmylation of RPL26/uL24 and subsequent 60S ribosome recycling either take place after normal termination of translation or after ribosome stalling during cotranslational translocation at the endoplasmic reticulum. Involved in reticulophagy in response to endoplasmic reticulum stress by mediating ufmylation of proteins such as CYB5R3 and RPN1, thereby promoting lysosomal degradation of ufmylated proteins. Ufmylation in response to endoplasmic reticulum stress is essential for processes such as hematopoiesis, blood vessel morphogenesis or inflammatory response. Regulates inflammation in response to endoplasmic reticulum stress by promoting reticulophagy, leading to inhibit the activity of the NF-kappa-B transcription factor. Mediates ufmylation of DDRGK1 and CDK5RAP3; the role of these modifications is however unclear: as both DDRGK1 and CDK5RAP3 act as substrate adapters for ufmylation, it is uncertain whether ufmylation of these proteins is, a collateral effect or is required for ufmylation. Acts as a negative regulator of T-cell activation by mediating ufmylation and stabilization of PDCD1/PD-1. Also involved in the response to DNA damage: recruited to double-strand break sites following DNA damage and mediates monoufmylation of histone H4 and ufmylation of MRE11. Mediates ufmylation of TP53/p53, promoting its stability. Catalyzes ufmylation of TRIP4, thereby playing a role in nuclear receptor-mediated transcription. Required for hematopoietic stem cell function and hematopoiesis. The polypeptide is E3 UFM1-protein ligase 1 (Bos taurus (Bovine)).